Consider the following 291-residue polypeptide: Acetyl-coenzyme A carboxylase carboxyl transferase subunit beta (291 aa).

Positions 36–291 constitute a CoA carboxyltransferase N-terminal domain; the sequence is MWVKCDGCGK…KILVIHGRGN (256 aa). Residues C40, C43, C59, and C62 each contribute to the Zn(2+) site. A C4-type zinc finger spans residues 40–62; sequence CDGCGKVLYKNDMEKNNKVCYHC.

This sequence belongs to the AccD/PCCB family. As to quaternary structure, acetyl-CoA carboxylase is a heterohexamer composed of biotin carboxyl carrier protein (AccB), biotin carboxylase (AccC) and two subunits each of ACCase subunit alpha (AccA) and ACCase subunit beta (AccD). Zn(2+) serves as cofactor.

It localises to the cytoplasm. The catalysed reaction is N(6)-carboxybiotinyl-L-lysyl-[protein] + acetyl-CoA = N(6)-biotinyl-L-lysyl-[protein] + malonyl-CoA. Its pathway is lipid metabolism; malonyl-CoA biosynthesis; malonyl-CoA from acetyl-CoA: step 1/1. Functionally, component of the acetyl coenzyme A carboxylase (ACC) complex. Biotin carboxylase (BC) catalyzes the carboxylation of biotin on its carrier protein (BCCP) and then the CO(2) group is transferred by the transcarboxylase to acetyl-CoA to form malonyl-CoA. The sequence is that of Acetyl-coenzyme A carboxylase carboxyl transferase subunit beta from Clostridium kluyveri (strain NBRC 12016).